Reading from the N-terminus, the 495-residue chain is Trimethylamine methyltransferase MttB1 (495 aa).

Pyl-334 is a non-standard amino acid (pyrrolysine).

The protein belongs to the trimethylamine methyltransferase family. In terms of assembly, can form a complex with MttC.

The catalysed reaction is Co(I)-[trimethylamine-specific corrinoid protein] + trimethylamine + H(+) = methyl-Co(III)-[trimethylamine-specific corrinoid protein] + dimethylamine. It functions in the pathway one-carbon metabolism; methanogenesis from trimethylamine. Catalyzes the transfer of a methyl group from trimethylamine to the corrinoid cofactor of MttC. The chain is Trimethylamine methyltransferase MttB1 (mttB1) from Methanosarcina mazei (strain ATCC BAA-159 / DSM 3647 / Goe1 / Go1 / JCM 11833 / OCM 88) (Methanosarcina frisia).